The chain runs to 633 residues: MDLLSIKDPAFLKNLSNEELESLSAEIRRFLIETLSESGGHIGPNLGVVELTIALHKEFDSPKDKFLWDVGHQSYVHKLLTGRGKDFATLRQHKGLCGFPKRNESEHDVWETGHSSTSLSGAMGMAAARDLKGTNEYIIPIIGDGALTGGMALEALNHIGHEQKDMIVILNDNEMSIAPNVGAIHSMLGRLRTAGKYQWVKDELEYLFKRIPAVGGKLAATAERIKDSLKYLLVSGMFFEELGFTYLGPVDGHSYDELFENLQYAKKTKGPVLLHVITKKGKGYKPAETDKTGTWHGTGPYKIDTGDFVKPKAAAPSWSSLVSETVRKLAREDERIVAITPAMPVGSKLEGFASEFPERMFDVGIAEQHAATMAAGLATQNMKPFLAIYSTFLQRAYDQVVHDICRQNLNVFIGIDRAGLVGADGETHQGVFDIAFLRHIPNLVLMMPKDENEGQHMVNTAVKYDDGPIAMRFPRGNGLGVKMDKELKTIPIGTWEVLRPGTDAVILTFGTTIPMALAAAEELQKEGRSVRVVNARFIKPLDENMLKEILNEGLPILTIEEAVLQGGFGSSILEFAHEHQSYSPIIDRMGIPDQFIEHGSVAKLLEEIGMTKEDVIRRIRLLTPVKTHKGIGS.

Thiamine diphosphate contacts are provided by residues His-72 and 113 to 115; that span reads GHS. Residue Asp-144 participates in Mg(2+) binding. Residues 145–146, Asn-173, Tyr-284, and Glu-367 each bind thiamine diphosphate; that span reads GA. Asn-173 lines the Mg(2+) pocket.

Belongs to the transketolase family. DXPS subfamily. As to quaternary structure, homodimer. Mg(2+) is required as a cofactor. Thiamine diphosphate serves as cofactor.

It catalyses the reaction D-glyceraldehyde 3-phosphate + pyruvate + H(+) = 1-deoxy-D-xylulose 5-phosphate + CO2. Its pathway is metabolic intermediate biosynthesis; 1-deoxy-D-xylulose 5-phosphate biosynthesis; 1-deoxy-D-xylulose 5-phosphate from D-glyceraldehyde 3-phosphate and pyruvate: step 1/1. In terms of biological role, catalyzes the acyloin condensation reaction between C atoms 2 and 3 of pyruvate and glyceraldehyde 3-phosphate to yield 1-deoxy-D-xylulose-5-phosphate (DXP). This chain is 1-deoxy-D-xylulose-5-phosphate synthase, found in Bacillus licheniformis (strain ATCC 14580 / DSM 13 / JCM 2505 / CCUG 7422 / NBRC 12200 / NCIMB 9375 / NCTC 10341 / NRRL NRS-1264 / Gibson 46).